Here is a 226-residue protein sequence, read N- to C-terminus: Sugar transporter SWEET1 (226 aa).

The next 7 helical transmembrane spans lie at 8–28, 42–62, 67–87, 94–114, 127–147, 161–181, and 185–205; these read LLST…AMIC, GVPF…GVLT, IVLV…IYYV, AFVR…VVYT, ITGI…LATL, LPLI…GILI, and FIQI…SLFV. Positions 8 to 92 constitute a MtN3/slv 1 domain; that stretch reads LLSTTAVIST…LIYYVFTVNK (85 aa). Positions 129–210 constitute a MtN3/slv 2 domain; the sequence is GIFCCIVTVC…LSLFVVYPPR (82 aa).

This sequence belongs to the SWEET sugar transporter family.

It is found in the golgi apparatus membrane. Its subcellular location is the cell membrane. Functionally, mediates both low-affinity uptake and efflux of sugar across the membrane. The polypeptide is Sugar transporter SWEET1 (slv) (Drosophila pseudoobscura pseudoobscura (Fruit fly)).